The following is a 426-amino-acid chain: Histidine--tRNA ligase 1 (426 aa).

This sequence belongs to the class-II aminoacyl-tRNA synthetase family. As to quaternary structure, homodimer.

It is found in the cytoplasm. The catalysed reaction is tRNA(His) + L-histidine + ATP = L-histidyl-tRNA(His) + AMP + diphosphate + H(+). The polypeptide is Histidine--tRNA ligase 1 (Shouchella clausii (strain KSM-K16) (Alkalihalobacillus clausii)).